The sequence spans 172 residues: C-phycocyanin beta chain (172 aa).

Position 72 is an N4-methylasparagine (Asn72). The (2R,3E)-phycocyanobilin site is built by Cys82 and Cys153.

Belongs to the phycobiliprotein family. Heterodimer of an alpha and a beta subunit, which further assembles into trimers and the trimers into hexamers. The basic functional unit of phycobiliproteins is a ring-shaped hexamer formed from two back-to-back trimers contacting via the alpha chain subunits. The trimers are composed of alpha/beta subunit heterodimers arranged around a three-fold axis of symmetry. The phycoerythrins also contain a gamma subunit which is located in the center of the hexamer. Contains two covalently linked bilin chromophores.

Its subcellular location is the plastid. It is found in the chloroplast thylakoid membrane. Functionally, light-harvesting photosynthetic bile pigment-protein from the phycobiliprotein complex (phycobilisome, PBS). Phycocyanin is the major phycobiliprotein in the PBS rod. This Pyropia yezoensis (Susabi-nori) protein is C-phycocyanin beta chain (cpcB).